The following is a 548-amino-acid chain: T-complex protein 1 subunit theta (548 aa).

At Ala-2 the chain carries N-acetylalanine. ADP-binding residues include Tyr-47 and Gly-48. Asp-99 serves as a coordination point for Mg(2+). 9 residues coordinate ADP: Gly-100, Thr-101, Asn-102, Phe-103, Met-169, Ser-170, Lys-171, Gly-412, and Asp-499. Residues Gly-100, Thr-101, and Asn-102 each coordinate ATP. 5 residues coordinate ATP: Ser-170, Lys-171, Gly-412, Asp-499, and Lys-504. The residue at position 505 (Tyr-505) is a Phosphotyrosine. Residues 529-548 form a disordered region; it reads PAGGPKPPSGKKDWDEDQND.

Component of the chaperonin-containing T-complex (TRiC), a hexadecamer composed of two identical back-to-back stacked rings enclosing a protein folding chamber. Each ring is made up of eight different subunits: TCP1/CCT1, CCT2, CCT3, CCT4, CCT5, CCT6A/CCT6, CCT7, CCT8.

It is found in the cytoplasm. Its subcellular location is the cytoskeleton. The protein resides in the microtubule organizing center. The protein localises to the centrosome. It localises to the cilium basal body. It carries out the reaction ATP + H2O = ADP + phosphate + H(+). In terms of biological role, component of the chaperonin-containing T-complex (TRiC), a molecular chaperone complex that assists the folding of actin, tubulin and other proteins upon ATP hydrolysis. This is T-complex protein 1 subunit theta from Gallus gallus (Chicken).